Consider the following 579-residue polypeptide: Arginine--tRNA ligase (579 aa).

Positions 128-138 match the 'HIGH' region motif; sequence PNLAKEMHVGH.

The protein belongs to the class-I aminoacyl-tRNA synthetase family. In terms of assembly, monomer.

It is found in the cytoplasm. It catalyses the reaction tRNA(Arg) + L-arginine + ATP = L-arginyl-tRNA(Arg) + AMP + diphosphate. The polypeptide is Arginine--tRNA ligase (Pseudomonas syringae pv. syringae (strain B728a)).